A 325-amino-acid polypeptide reads, in one-letter code: Tetraacyldisaccharide 4'-kinase (325 aa).

53–60 is a binding site for ATP; that stretch reads SVGGNGKT.

It belongs to the LpxK family.

The enzyme catalyses a lipid A disaccharide + ATP = a lipid IVA + ADP + H(+). The protein operates within glycolipid biosynthesis; lipid IV(A) biosynthesis; lipid IV(A) from (3R)-3-hydroxytetradecanoyl-[acyl-carrier-protein] and UDP-N-acetyl-alpha-D-glucosamine: step 6/6. Its function is as follows. Transfers the gamma-phosphate of ATP to the 4'-position of a tetraacyldisaccharide 1-phosphate intermediate (termed DS-1-P) to form tetraacyldisaccharide 1,4'-bis-phosphate (lipid IVA). The protein is Tetraacyldisaccharide 4'-kinase of Actinobacillus succinogenes (strain ATCC 55618 / DSM 22257 / CCUG 43843 / 130Z).